Consider the following 155-residue polypeptide: Ribosomal RNA large subunit methyltransferase H (155 aa).

S-adenosyl-L-methionine is bound by residues Leu72, Gly104, and 123 to 128 (LSRMTF).

It belongs to the RNA methyltransferase RlmH family. Homodimer.

Its subcellular location is the cytoplasm. It catalyses the reaction pseudouridine(1915) in 23S rRNA + S-adenosyl-L-methionine = N(3)-methylpseudouridine(1915) in 23S rRNA + S-adenosyl-L-homocysteine + H(+). Specifically methylates the pseudouridine at position 1915 (m3Psi1915) in 23S rRNA. The chain is Ribosomal RNA large subunit methyltransferase H from Kosmotoga olearia (strain ATCC BAA-1733 / DSM 21960 / TBF 19.5.1).